The sequence spans 253 residues: U1 small nuclear ribonucleoprotein A (253 aa).

The RRM 1 domain occupies 23–102 (VTIYINNLNE…KPMRIQYAKT (80 aa)). The interval 111–140 (DGTFVPRERRKRNDEKPEKKQKREQHHDVS) is disordered. The RRM 2 domain maps to 179-253 (NILFVQNLPH…NQMLISYAKK (75 aa)).

The protein belongs to the RRM U1 A/B'' family. In terms of assembly, component of the spliceosome where it is associated with snRNP U1.

It is found in the nucleus. It localises to the nucleolus. Its function is as follows. Involved in nuclear pre-mRNA splicing. This chain is U1 small nuclear ribonucleoprotein A, found in Oryza sativa subsp. indica (Rice).